The sequence spans 554 residues: Glucose-6-phosphate isomerase (554 aa).

Glutamate 359 (proton donor) is an active-site residue. Active-site residues include histidine 390 and lysine 518.

Belongs to the GPI family.

The protein resides in the cytoplasm. It carries out the reaction alpha-D-glucose 6-phosphate = beta-D-fructose 6-phosphate. It participates in carbohydrate biosynthesis; gluconeogenesis. It functions in the pathway carbohydrate degradation; glycolysis; D-glyceraldehyde 3-phosphate and glycerone phosphate from D-glucose: step 2/4. Catalyzes the reversible isomerization of glucose-6-phosphate to fructose-6-phosphate. In Pseudomonas entomophila (strain L48), this protein is Glucose-6-phosphate isomerase.